A 694-amino-acid chain; its full sequence is Nucleolin (694 aa).

Positions 1–277 are disordered; sequence MVKLAKTPKN…EAKKKKTETP (277 aa). The span at 26–40 shows a compositional bias: acidic residues; sequence ESEEEESSDLEESSG. Residues 46–108 show a composition bias toward low complexity; it reads PPKKQQKAAV…AVVGKGAKNG (63 aa). Repeat copies occupy residues 55–61, 62–68, 69–75, 76–82, and 84–90. Positions 55–90 are 5 X 7 AA tandem repeats of X-T-P-X-K-K-X; that stretch reads VTPAKKAATPAKKAATPAKKAVTPAKKAVATPAKKA. Ser-116 and Ser-136 each carry phosphoserine. The span at 116–142 shows a compositional bias: acidic residues; sequence SEEEDEDDEDDEEDEDEEEESDEEEEP. Over residues 143-168 the composition is skewed to low complexity; sequence AVPVKPAAKKSAAAVPAKKPAVVPAK. Ser-171 carries the phosphoserine modification. Positions 171-194 are enriched in acidic residues; the sequence is SEEEEEEDDEEEDEEDDESEDEAM. Residues 196–213 are compositionally biased toward low complexity; that stretch reads TTPAPVKKPTPAKATPAK. A compositionally biased stretch (acidic residues) spans 218–246; it reads SEDEEDEEDEDEDEEDEDDEEEDEEESED. 4 RRM domains span residues 281–357, 371–445, 461–535, and 553–628; these read FSLF…KAKS, RTLF…YTGE, KTLI…FSSP, and KTLF…FAKP. The segment at 631 to 694 is disordered; it reads EFQRGGGFGG…KPQGKKIKFE (64 aa). Positions 633–680 are enriched in gly residues; that stretch reads QRGGGFGGGFGGRGGRGGRGGGRGGFGGRGGGRGFGGRGGGFRGGRGG. Residues 681–694 are compositionally biased toward basic and acidic residues; sequence GGDHKPQGKKIKFE.

In terms of processing, highly phosphorylated during mitosis.

The protein resides in the nucleus. The protein localises to the nucleolus. Its function is as follows. Nucleolin is the major nucleolar protein of growing eukaryotic cells. It is found associated with intranucleolar chromatin and pre-ribosomal particles. It induces chromatin decondensation by binding to histone H1. It is thought to play a role in pre-rRNA transcription and ribosome assembly. This chain is Nucleolin (NCL), found in Gallus gallus (Chicken).